The sequence spans 163 residues: Cytochrome c-type biogenesis protein CcmE (163 aa).

Over 1–7 (MTRKQRR) the chain is Cytoplasmic. A helical; Signal-anchor for type II membrane protein transmembrane segment spans residues 8 to 28 (LVFIGTCGAVLAVALGLVLWA). The Periplasmic segment spans residues 29–163 (MSGTIVFFRS…RTASGEARAP (135 aa)). Heme-binding residues include His122 and Tyr126. The interval 134–163 (ALKKSGRWQEGAGHPAPAPPRTASGEARAP) is disordered.

This sequence belongs to the CcmE/CycJ family.

The protein localises to the cell inner membrane. Heme chaperone required for the biogenesis of c-type cytochromes. Transiently binds heme delivered by CcmC and transfers the heme to apo-cytochromes in a process facilitated by CcmF and CcmH. The chain is Cytochrome c-type biogenesis protein CcmE from Methylobacterium sp. (strain 4-46).